Here is a 753-residue protein sequence, read N- to C-terminus: 5-methyltetrahydropteroyltriglutamate--homocysteine methyltransferase (753 aa).

5-methyltetrahydropteroyltri-L-glutamate-binding positions include 17–20 and Lys-117; that span reads RELK. L-homocysteine contacts are provided by residues 431–433 and Glu-484; that span reads IGS. Residues 431–433 and Glu-484 each bind L-methionine; that span reads IGS. Residues 515–516 and Trp-561 each bind 5-methyltetrahydropteroyltri-L-glutamate; that span reads RC. Residue Asp-599 participates in L-homocysteine binding. Asp-599 lines the L-methionine pocket. Glu-605 is a binding site for 5-methyltetrahydropteroyltri-L-glutamate. Zn(2+) contacts are provided by His-641, Cys-643, and Glu-665. Residue His-694 is the Proton donor of the active site. Cys-726 is a binding site for Zn(2+).

It belongs to the vitamin-B12 independent methionine synthase family. Requires Zn(2+) as cofactor.

The enzyme catalyses 5-methyltetrahydropteroyltri-L-glutamate + L-homocysteine = tetrahydropteroyltri-L-glutamate + L-methionine. It participates in amino-acid biosynthesis; L-methionine biosynthesis via de novo pathway; L-methionine from L-homocysteine (MetE route): step 1/1. In terms of biological role, catalyzes the transfer of a methyl group from 5-methyltetrahydrofolate to homocysteine resulting in methionine formation. This Escherichia coli O6:H1 (strain CFT073 / ATCC 700928 / UPEC) protein is 5-methyltetrahydropteroyltriglutamate--homocysteine methyltransferase.